The primary structure comprises 431 residues: Glutamate-1-semialdehyde 2,1-aminomutase (431 aa).

The residue at position 267 (lysine 267) is an N6-(pyridoxal phosphate)lysine.

It belongs to the class-III pyridoxal-phosphate-dependent aminotransferase family. HemL subfamily. In terms of assembly, homodimer. Requires pyridoxal 5'-phosphate as cofactor.

It localises to the cytoplasm. The catalysed reaction is (S)-4-amino-5-oxopentanoate = 5-aminolevulinate. The protein operates within porphyrin-containing compound metabolism; protoporphyrin-IX biosynthesis; 5-aminolevulinate from L-glutamyl-tRNA(Glu): step 2/2. The chain is Glutamate-1-semialdehyde 2,1-aminomutase from Syntrophomonas wolfei subsp. wolfei (strain DSM 2245B / Goettingen).